The sequence spans 95 residues: 6 kDa early secretory antigenic target (95 aa).

2 consecutive transmembrane segments (helical) span residues 11–43 and 49–85; these read IEAA…AAAW and EAYQ…AMAS. Residues 56-87 adopt a coiled-coil conformation; the sequence is QKWDATATELNNALQNLARTISEAGQAMASTE.

This sequence belongs to the WXG100 family. ESAT-6 subfamily. In terms of assembly, forms a tight 1:1 complex with EsxB (CFP-10).

It localises to the secreted. It is found in the host membrane. In terms of biological role, a secreted protein. Acts as a strong host T-cell antigen. Plays a number of roles in modulating the host's immune response to infection as well as being responsible for bacterial escape into the host cytoplasm. The sequence is that of 6 kDa early secretory antigenic target (esxA) from Mycobacterium bovis (strain ATCC BAA-935 / AF2122/97).